Here is a 134-residue protein sequence, read N- to C-terminus: UPF0412 protein YaaI (134 aa).

Residues 1 to 23 form the signal peptide; sequence MKSVITISASLAISLMLCCTAQA.

Belongs to the UPF0412 family.

The protein is UPF0412 protein YaaI of Escherichia coli O127:H6 (strain E2348/69 / EPEC).